The sequence spans 135 residues: Holo-[acyl-carrier-protein] synthase (135 aa).

Asp7 and Glu57 together coordinate Mg(2+).

The protein belongs to the P-Pant transferase superfamily. AcpS family. The cofactor is Mg(2+).

The protein localises to the cytoplasm. The catalysed reaction is apo-[ACP] + CoA = holo-[ACP] + adenosine 3',5'-bisphosphate + H(+). Transfers the 4'-phosphopantetheine moiety from coenzyme A to a Ser of acyl-carrier-protein. The sequence is that of Holo-[acyl-carrier-protein] synthase from Corynebacterium glutamicum (strain R).